The chain runs to 155 residues: Endoribonuclease YbeY (155 aa).

Zn(2+) is bound by residues His-114, His-118, and His-124.

The protein belongs to the endoribonuclease YbeY family. It depends on Zn(2+) as a cofactor.

The protein resides in the cytoplasm. Its function is as follows. Single strand-specific metallo-endoribonuclease involved in late-stage 70S ribosome quality control and in maturation of the 3' terminus of the 16S rRNA. This chain is Endoribonuclease YbeY, found in Escherichia coli O81 (strain ED1a).